Consider the following 393-residue polypeptide: Succinate--CoA ligase [ADP-forming] subunit beta (393 aa).

The 234-residue stretch at 9-242 (KELFAKHGVP…RAATDPLEWK (234 aa)) folds into the ATP-grasp domain. ATP-binding positions include lysine 45, 52-54 (GRG), serine 94, and glutamate 99. Asparagine 191 and aspartate 211 together coordinate Mg(2+). Substrate contacts are provided by residues asparagine 262 and 324 to 326 (GIT).

It belongs to the succinate/malate CoA ligase beta subunit family. As to quaternary structure, heterotetramer of two alpha and two beta subunits. Mg(2+) serves as cofactor.

The enzyme catalyses succinate + ATP + CoA = succinyl-CoA + ADP + phosphate. The catalysed reaction is GTP + succinate + CoA = succinyl-CoA + GDP + phosphate. Its pathway is carbohydrate metabolism; tricarboxylic acid cycle; succinate from succinyl-CoA (ligase route): step 1/1. Its function is as follows. Succinyl-CoA synthetase functions in the citric acid cycle (TCA), coupling the hydrolysis of succinyl-CoA to the synthesis of either ATP or GTP and thus represents the only step of substrate-level phosphorylation in the TCA. The beta subunit provides nucleotide specificity of the enzyme and binds the substrate succinate, while the binding sites for coenzyme A and phosphate are found in the alpha subunit. The sequence is that of Succinate--CoA ligase [ADP-forming] subunit beta from Mycobacterium leprae (strain Br4923).